A 117-amino-acid polypeptide reads, in one-letter code: Large ribosomal subunit protein uL18 (117 aa).

Belongs to the universal ribosomal protein uL18 family. In terms of assembly, part of the 50S ribosomal subunit; part of the 5S rRNA/L5/L18/L25 subcomplex. Contacts the 5S and 23S rRNAs.

Functionally, this is one of the proteins that bind and probably mediate the attachment of the 5S RNA into the large ribosomal subunit, where it forms part of the central protuberance. This is Large ribosomal subunit protein uL18 from Francisella tularensis subsp. novicida (strain U112).